A 625-amino-acid polypeptide reads, in one-letter code: Threonine--tRNA ligase (625 aa).

The tract at residues 1 to 143 (MRILLIHSDY…ELSRTIIPEG (143 aa)) is editing domain. Residues 206 to 505 (PHVKLMLEHE…MQEGKKPMLP (300 aa)) form a catalytic region. Residues Cys298, His350, and His474 each coordinate Zn(2+).

This sequence belongs to the class-II aminoacyl-tRNA synthetase family. Homodimer. Requires Zn(2+) as cofactor.

It localises to the cytoplasm. The enzyme catalyses tRNA(Thr) + L-threonine + ATP = L-threonyl-tRNA(Thr) + AMP + diphosphate + H(+). Functionally, catalyzes the attachment of threonine to tRNA(Thr) in a two-step reaction: L-threonine is first activated by ATP to form Thr-AMP and then transferred to the acceptor end of tRNA(Thr). Also edits incorrectly charged L-seryl-tRNA(Thr). The chain is Threonine--tRNA ligase from Pyrococcus horikoshii (strain ATCC 700860 / DSM 12428 / JCM 9974 / NBRC 100139 / OT-3).